Consider the following 165-residue polypeptide: Protein SprT (165 aa).

A SprT-like domain is found at 20 to 163; that stretch reads EKLAQANLKL…RCVHCGEQLV (144 aa). Position 78 (His-78) interacts with Zn(2+). Residue Glu-79 is part of the active site. Position 82 (His-82) interacts with Zn(2+).

This sequence belongs to the SprT family. It depends on Zn(2+) as a cofactor.

The protein localises to the cytoplasm. The chain is Protein SprT from Shigella boydii serotype 18 (strain CDC 3083-94 / BS512).